The following is a 357-amino-acid chain: MKNNKRILFTGGGTAGHVIVNLALIPYYQERGWEIDYIGSYNGIERDLISPLDGVTYHSVSTGKLRRYMSKENLKDPFKVLKGTMQAYRIIGKRKPSIVFSKGGFVSVPVVAAAKLRGVPSIIHESDYTPGLANKLSIPFTKRVLATFPETMKYLPENKASYVGAVIRDELFTGKRDIGLKISGLKGNKPVLLVMGGSGGSEKINQTIRQSLTKLLDEFEIIHICGKGKVDDSIQLDGYVQFEYINHELKDIFAATDLVISRAGSNAIFEFLALRLPMLLIPLSKEASRGDQIINANSFKKKNYARVLQEEELTEQSLESHLLELSKAAPIIRDEMKKYKSEQSLQSVTEIIDNVMK.

UDP-N-acetyl-alpha-D-glucosamine is bound by residues 14–16 (TAG), arginine 168, serine 198, and glutamine 292.

The protein belongs to the glycosyltransferase 28 family. MurG subfamily.

It is found in the cell membrane. The catalysed reaction is di-trans,octa-cis-undecaprenyl diphospho-N-acetyl-alpha-D-muramoyl-L-alanyl-D-glutamyl-meso-2,6-diaminopimeloyl-D-alanyl-D-alanine + UDP-N-acetyl-alpha-D-glucosamine = di-trans,octa-cis-undecaprenyl diphospho-[N-acetyl-alpha-D-glucosaminyl-(1-&gt;4)]-N-acetyl-alpha-D-muramoyl-L-alanyl-D-glutamyl-meso-2,6-diaminopimeloyl-D-alanyl-D-alanine + UDP + H(+). It functions in the pathway cell wall biogenesis; peptidoglycan biosynthesis. Its function is as follows. Cell wall formation. Catalyzes the transfer of a GlcNAc subunit on undecaprenyl-pyrophosphoryl-MurNAc-pentapeptide (lipid intermediate I) to form undecaprenyl-pyrophosphoryl-MurNAc-(pentapeptide)GlcNAc (lipid intermediate II). This Oceanobacillus iheyensis (strain DSM 14371 / CIP 107618 / JCM 11309 / KCTC 3954 / HTE831) protein is UDP-N-acetylglucosamine--N-acetylmuramyl-(pentapeptide) pyrophosphoryl-undecaprenol N-acetylglucosamine transferase.